We begin with the raw amino-acid sequence, 342 residues long: Autoinducer 2 import system permease protein LsrC (342 aa).

At 1 to 13 (MLKFIQNNREITA) the chain is on the periplasmic side. A helical membrane pass occupies residues 14-34 (LLAVVLLFVLPGFLDRQYLSV). Over 35 to 38 (QTLT) the chain is Cytoplasmic. Residues 39 to 59 (MVYSSAQILILLAMGATLVML) form a helical membrane-spanning segment. The Periplasmic segment spans residues 60–69 (TRNIDVSVGS). The helical transmembrane segment at 70–90 (ITGMCAVLLGMLLNAGYSLPV) threads the bilayer. Residues 91 to 92 (AC) are Cytoplasmic-facing. Residues 93–113 (VATLLLGLLAGFFNGVLVAWL) traverse the membrane as a helical segment. A topological domain (periplasmic) is located at residue Lys-114. The chain crosses the membrane as a helical span at residues 115–135 (IPAIVATLGTLGLYRGIMLLW). The Cytoplasmic portion of the chain corresponds to 136–154 (TGGKWIEGLPAELKQLSAP). Residues 155–175 (LLFGVSAIGWLTIILVAFMAW) form a helical membrane-spanning segment. Residues 176–212 (LLAKTAFGRSFYVTGDNLQGARQLGVRTEAIRIVAFS) lie on the Periplasmic side of the membrane. A helical transmembrane segment spans residues 213 to 233 (LNGCMAALAGIVFASQIGFIP). At 234–251 (NQTGTGLEMKAIAACVLG) the chain is on the cytoplasmic side. The helical transmembrane segment at 252-272 (GISLLGGSGAIIGAVLGAWFL) threads the bilayer. The Periplasmic portion of the chain corresponds to 273–283 (TQIDSVLVLLR). The chain crosses the membrane as a helical span at residues 284 to 304 (IPAWWNDFIAGMVLLAVLVFD). Residues 305–342 (GRLRCALERNLRRQKYARFMMPPPPVKPASSGKKREAA) lie on the Cytoplasmic side of the membrane.

The protein belongs to the binding-protein-dependent transport system permease family. AraH/RbsC subfamily. In terms of assembly, the complex is composed of two ATP-binding proteins (LsrA), two transmembrane proteins (LsrC and LsrD) and a solute-binding protein (LsrB).

The protein localises to the cell inner membrane. In terms of biological role, part of the ABC transporter complex LsrABCD involved in autoinducer 2 (AI-2) import. Probably responsible for the translocation of the substrate across the membrane. In Escherichia coli (strain SMS-3-5 / SECEC), this protein is Autoinducer 2 import system permease protein LsrC (lsrC).